Consider the following 392-residue polypeptide: Putative RNA-binding protein Luc7-like 2 (392 aa).

Serine 18 bears the Phosphoserine mark. Positions glutamate 102 to methionine 177 form a coiled coil. A compositionally biased stretch (basic and acidic residues) spans lysine 235–lysine 257. The segment at lysine 235–isoleucine 392 is disordered. The segment covering leucine 258–histidine 321 has biased composition (basic residues). 5-hydroxylysine; by JMJD6 is present on residues lysine 266 and lysine 269. Basic and acidic residues-rich tracts occupy residues lysine 337–arginine 364 and arginine 377–isoleucine 392.

This sequence belongs to the Luc7 family. In terms of assembly, interacts with SCNM1. As to expression, all isoforms are expressed in brain, kidney, heart, thymus, stomach, skeletal muscle, testis and spinal cord.

The protein resides in the nucleus speckle. It is found in the nucleus. Its subcellular location is the nucleoplasm. Its function is as follows. May bind to RNA via its Arg/Ser-rich domain. This Mus musculus (Mouse) protein is Putative RNA-binding protein Luc7-like 2 (Luc7l2).